Here is a 245-residue protein sequence, read N- to C-terminus: 1-(5-phosphoribosyl)-5-[(5-phosphoribosylamino)methylideneamino] imidazole-4-carboxamide isomerase 1 (245 aa).

Asp7 (proton acceptor) is an active-site residue. Asp129 serves as the catalytic Proton donor.

It belongs to the HisA/HisF family.

The protein resides in the cytoplasm. It carries out the reaction 1-(5-phospho-beta-D-ribosyl)-5-[(5-phospho-beta-D-ribosylamino)methylideneamino]imidazole-4-carboxamide = 5-[(5-phospho-1-deoxy-D-ribulos-1-ylimino)methylamino]-1-(5-phospho-beta-D-ribosyl)imidazole-4-carboxamide. Its pathway is amino-acid biosynthesis; L-histidine biosynthesis; L-histidine from 5-phospho-alpha-D-ribose 1-diphosphate: step 4/9. This Photorhabdus laumondii subsp. laumondii (strain DSM 15139 / CIP 105565 / TT01) (Photorhabdus luminescens subsp. laumondii) protein is 1-(5-phosphoribosyl)-5-[(5-phosphoribosylamino)methylideneamino] imidazole-4-carboxamide isomerase 1 (hisA1).